Reading from the N-terminus, the 1413-residue chain is MRHGVAWALLVAAALGLGARGVRGAVALADFYPFGAERGDAVTPKQDDGGSGLRPLSVPFPFFGAEHSGLYVNNNGIISFLKEVSQFTPVAFPIAKDRCVVAAFWADVDNRRAGDVYYREATDPAMLRRATEDVRHYFPELLDFNATWVFVATWYRVTFFGGSSSSPVNTFQTVLITDGKLSFTIFNYESIVWTTGTHASSGGNATGLGGIAAQAGFNAGDGQRYFSIPGSRTADMAEVETTTNVGVPGRWAFRIDDAQVRVGGCGHTTSVCLALRPCLNGGKCIDDCVTGNPSYTCSCLSGFTGRRCHLDVNECASQPCQNGGTCTHGINSFRCQCPAGFGGPTCETAQSPCDTKECQHGGQCQVENGSAVCVCQAGYTGAACEMDVDDCSPDPCLNGGSCVDLVGNYTCLCAEPFKGLRCETGDHPVPDACLSAPCHNGGTCVDADQGYVCECPEGFMGLDCRERVPDDCECRNGGRCLGANTTLCQCPLGFFGLLCEFEITAMPCNMNTQCPDGGYCMEHGGSYLCVCHTDHNASHSLPSPCDSDPCFNGGSCDAHDDSYTCECPRGFHGKHCEKARPHLCSSGPCRNGGTCKEAGGEYHCSCPYRFTGRHCEIGKPDSCASGPCHNGGTCFHYIGKYKCDCPPGFSGRHCEIAPSPCFRSPCVNGGTCEDRDTDFFCHCQAGYMGRRCQAEVDCGPPEEVKHATLRFNGTRLGAVALYACDRGYSLSAPSRIRVCQPHGVWSEPPQCLEIDECRSQPCLHGGSCQDRVAGYLCLCSTGYEGAHCELERDECRAHPCRNGGSCRNLPGAYVCRCPAGFVGVHCETEVDACDSSPCQHGGRCESGGGAYLCVCPESFFGYHCETVSDPCFSSPCGGRGYCLASNGSHSCTCKVGYTGEDCAKELFPPTALKMERVEESGVSISWNPPNGPAARQMLDGYAVTYVSSDGSYRRTDFVDRTRSSHQLQALAAGRAYNISVFSVKRNSNNKNDISRPAVLLARTRPRPVEGFEVTNVTASTISVQWALHRIRHATVSGVRVSIRHPEALRDQATDVDRSVDRFTFRALLPGKRYTIQLTTLSGLRGEEHPTESLATAPTHVWTRPLPPANLTAARVTATSAHVVWDAPTPGSLLEAYVINVTTSQSTKSRYVPNGKLASYTVRDLLPGRRYQLSVIAVQSTELGPQHSEPAHLYIITSPRDGADRRWHQGGHHPRVLKNRPPPARLPELRLLNDHSAPETPTQPPRFSELVDGRGRVSARFGGSPSKAATVRSQPTASAQLENMEEAPKRVSLALQLPEHGSKDIGNVPGNCSENPCQNGGTCVPGADAHSCDCGPGFKGRRCELACIKVSRPCTRLFSETKAFPVWEGGVCHHVYKRVYRVHQDICFKESCESTSLKKTPNRKQSKSQTLEKS.

Residues 1–24 (MRHGVAWALLVAAALGLGARGVRG) form the signal peptide. The region spanning 103-258 (AFWADVDNRR…GRWAFRIDDA (156 aa)) is the NIDO domain. N-linked (GlcNAc...) asparagine glycans are attached at residues Asn-145 and Asn-204. EGF-like domains follow at residues 268 to 309 (TTSV…RRCH), 311 to 347 (DVNECASQPCQNGGTCTHGINSFRCQCPAGFGGPTCE), and 349 to 385 (AQSPCDTKECQHGGQCQVENGSAVCVCQAGYTGAACE). 18 disulfide bridges follow: Cys-272-Cys-284, Cys-278-Cys-297, Cys-299-Cys-308, Cys-315-Cys-326, Cys-320-Cys-335, Cys-337-Cys-346, Cys-353-Cys-364, Cys-358-Cys-373, Cys-375-Cys-384, Cys-391-Cys-402, Cys-396-Cys-411, Cys-413-Cys-422, Cys-433-Cys-444, Cys-438-Cys-453, Cys-455-Cys-464, Cys-472-Cys-480, Cys-474-Cys-488, and Cys-490-Cys-499. An N-linked (GlcNAc...) asparagine glycan is attached at Asn-292. The Follistatin-like 1 domain occupies 352 to 374 (PCDTKECQHGGQCQVENGSAVCV). Asn-368 carries an N-linked (GlcNAc...) asparagine glycan. One can recognise an EGF-like 4; calcium-binding domain in the interval 387–423 (DVDDCSPDPCLNGGSCVDLVGNYTCLCAEPFKGLRCE). N-linked (GlcNAc...) asparagine glycosylation is present at Asn-408. EGF-like domains follow at residues 429 to 465 (VPDACLSAPCHNGGTCVDADQGYVCECPEGFMGLDCR) and 468 to 500 (VPDDCECRNGGRCLGANTTLCQCPLGFFGLLCE). Residue Asn-484 is glycosylated (N-linked (GlcNAc...) asparagine). Residues 507–530 (PCNMNTQCPDGGYCMEHGGSYLCV) enclose the Follistatin-like 2 domain. A glycan (N-linked (GlcNAc...) asparagine) is linked at Asn-536. 4 EGF-like domains span residues 541–577 (LPSPCDSDPCFNGGSCDAHDDSYTCECPRGFHGKHCE), 580–616 (RPHLCSSGPCRNGGTCKEAGGEYHCSCPYRFTGRHCE), 619–655 (KPDSCASGPCHNGGTCFHYIGKYKCDCPPGFSGRHCE), and 657–693 (APSPCFRSPCVNGGTCEDRDTDFFCHCQAGYMGRRCQ). Intrachain disulfides connect Cys-545–Cys-556, Cys-550–Cys-565, Cys-567–Cys-576, Cys-584–Cys-595, Cys-589–Cys-604, Cys-606–Cys-615, Cys-623–Cys-634, Cys-628–Cys-643, Cys-645–Cys-654, Cys-661–Cys-672, Cys-666–Cys-681, Cys-683–Cys-692, Cys-698–Cys-739, Cys-724–Cys-751, Cys-757–Cys-768, Cys-762–Cys-777, Cys-779–Cys-788, Cys-795–Cys-806, Cys-800–Cys-815, Cys-817–Cys-826, Cys-833–Cys-844, Cys-838–Cys-853, Cys-855–Cys-864, Cys-871–Cys-882, Cys-876–Cys-891, and Cys-893–Cys-902. A Sushi domain is found at 696-753 (VDCGPPEEVKHATLRFNGTRLGAVALYACDRGYSLSAPSRIRVCQPHGVWSEPPQCLE). An N-linked (GlcNAc...) asparagine glycan is attached at Asn-712. One can recognise an EGF-like 11; calcium-binding domain in the interval 753 to 789 (EIDECRSQPCLHGGSCQDRVAGYLCLCSTGYEGAHCE). Residues 791–827 (ERDECRAHPCRNGGSCRNLPGAYVCRCPAGFVGVHCE) form the EGF-like 12; calcium-binding domain. EGF-like domains lie at 829–865 (EVDACDSSPCQHGGRCESGGGAYLCVCPESFFGYHCE) and 867–903 (VSDPCFSSPCGGRGYCLASNGSHSCTCKVGYTGEDCA). N-linked (GlcNAc...) asparagine glycosylation is present at Asn-886. Fibronectin type-III domains follow at residues 908 to 1006 (PPTA…TRPR), 1007 to 1105 (PVEG…TRPL), and 1106 to 1200 (PPAN…SPRD). N-linked (GlcNAc...) asparagine glycosylation is found at Asn-977, Asn-1015, Asn-1109, and Asn-1139. Positions 1206–1226 (WHQGGHHPRVLKNRPPPARLP) are disordered. Residues 1207 to 1217 (HQGGHHPRVLK) are compositionally biased toward basic residues. The EGF-like 15 domain occupies 1307–1343 (VPGNCSENPCQNGGTCVPGADAHSCDCGPGFKGRRCE). Asn-1310 carries N-linked (GlcNAc...) asparagine glycosylation. Cystine bridges form between Cys-1311-Cys-1322, Cys-1316-Cys-1331, and Cys-1333-Cys-1342. A disordered region spans residues 1394-1413 (TSLKKTPNRKQSKSQTLEKS).

In terms of processing, phosphorylated on serine and threonine residues. Post-translationally, N-glycosylated.

It is found in the secreted. The protein localises to the extracellular space. It localises to the extracellular matrix. The chain is Sushi, nidogen and EGF-like domain-containing protein 1 from Homo sapiens (Human).